The chain runs to 274 residues: Large ribosomal subunit protein uL2 (274 aa).

The disordered stretch occupies residues 224 to 259 (AMNPVDHPHGGGEGRTSGGRHPVTPWGIPTKGYKTR).

The protein belongs to the universal ribosomal protein uL2 family. In terms of assembly, part of the 50S ribosomal subunit. Forms a bridge to the 30S subunit in the 70S ribosome.

One of the primary rRNA binding proteins. Required for association of the 30S and 50S subunits to form the 70S ribosome, for tRNA binding and peptide bond formation. It has been suggested to have peptidyltransferase activity; this is somewhat controversial. Makes several contacts with the 16S rRNA in the 70S ribosome. The polypeptide is Large ribosomal subunit protein uL2 (Geobacter sp. (strain M21)).